Reading from the N-terminus, the 950-residue chain is Kinase suppressor of Ras 2 (950 aa).

The tract at residues 239–296 (PPLESGHRSLPPSPRQRHAVRTPPRTPNIVTTVTPPGTPPMRKKNKLKPPGTPPPSSR) is disordered. Low complexity predominate over residues 259–273 (RTPPRTPNIVTTVTP). Residues T272 and T276 each carry the phosphothreonine modification. A Phorbol-ester/DAG-type zinc finger spans residues 412 to 456 (KHRFSTKYWMSQTCTVCGKGMLFGLKCKNCKLKCHNKCTKEAPPC). H413, C425, C428, C438, C441, H446, C449, and C456 together coordinate Zn(2+). S474 is modified (phosphoserine; by MARK3). T497 bears the Phosphothreonine mark. The disordered stretch occupies residues 498 to 556 (LPKTNKINKDHIPVPYQPDSSSNPSSTTSSTPSSPAPPLPPSATPPSPLHPSPQCTRQQ). Residues 517-530 (SSSNPSSTTSSTPS) are compositionally biased toward low complexity. The span at 531–548 (SPAPPLPPSATPPSPLHP) shows a compositional bias: pro residues. The Protein kinase domain maps to 666-931 (LEIGELIGKG…TKLMDMLEKL (266 aa)). Residue 672–680 (IGKGRFGQV) coordinates ATP. D786 (proton donor/acceptor) is an active-site residue. The ATP site is built by K788 and D803.

The protein belongs to the protein kinase superfamily. TKL Ser/Thr protein kinase family. As to quaternary structure, heterodimerizes (via N-terminus) with BRAF (via N-terminus) in a MAP2K1/MEK1-dependent manner. Interacts with BRAF; this increases the low intrinsic protein kinase activity of KSR2. Interacts with MAP2K1, forming a heterodimer that can dimerize to form a heterotetramer. Interacts with MAP3K8, MAPK, RAS and RAF. In terms of processing, phosphorylated on Ser-474 by MARK3. In terms of tissue distribution, mainly expressed in brain and kidney.

It localises to the cytoplasm. Its subcellular location is the membrane. The catalysed reaction is L-seryl-[protein] + ATP = O-phospho-L-seryl-[protein] + ADP + H(+). It catalyses the reaction L-threonyl-[protein] + ATP = O-phospho-L-threonyl-[protein] + ADP + H(+). Kinase activity is inhibited by ASC24. Functionally, location-regulated scaffold connecting MEK to RAF. Has very low protein kinase activity and can phosphorylate MAP2K1 at several Ser and Thr residues with very low efficiency (in vitro). Acts as MAP2K1/MEK1-dependent allosteric activator of BRAF; upon binding to MAP2K1/MEK1, dimerizes with BRAF and promotes BRAF-mediated phosphorylation of MAP2K1/MEK1. Interaction with BRAF enhances KSR2-mediated phosphorylation of MAP2K1 (in vitro). Blocks MAP3K8 kinase activity and MAP3K8-mediated signaling. Acts as a negative regulator of MAP3K3-mediated activation of ERK, JNK and NF-kappa-B pathways, inhibiting MAP3K3-mediated interleukin-8 production. This is Kinase suppressor of Ras 2 from Homo sapiens (Human).